The primary structure comprises 279 residues: Cell death abnormality protein 2 (279 aa).

The region spanning 14–115 (FYFPGMSREE…EASLLAAYKK (102 aa)) is the SH2 domain. An SH3 1 domain is found at 116–176 (PIIEVVVGTF…PANYVQIQME (61 aa)). A disordered region spans residues 181-213 (RTSKGASQSSIGSSGGGAERFSSASTSSDNIEL). Positions 202 to 211 (SSASTSSDNI) are enriched in polar residues. In terms of domain architecture, SH3 2 spans 214 to 277 (QPRLPAKAKV…PHTYLRFTAV (64 aa)).

The protein belongs to the CRK family. In terms of assembly, interacts with ced-5 (via C-terminus which contains a candidate SH3-binding, proline-rich region). Forms a ternary complex with ced-5 and ced-12. Interacts (via SH2 domain) with src-1 (when activated and phosphorylated at 'Tyr-416').

Required for cell migration and engulfment of cell corpses but not for programmed cell death/apoptosis. Has a role in the migration of the 2 gonadal distal tip cells (DTCs). Plays a role in protecting dopaminergic neurons from oxidative stress-induced degeneration. This chain is Cell death abnormality protein 2, found in Caenorhabditis elegans.